Reading from the N-terminus, the 64-residue chain is Large ribosomal subunit protein bL28 (64 aa).

Belongs to the bacterial ribosomal protein bL28 family.

In Trichlorobacter lovleyi (strain ATCC BAA-1151 / DSM 17278 / SZ) (Geobacter lovleyi), this protein is Large ribosomal subunit protein bL28.